The primary structure comprises 665 residues: Translation factor guf1, mitochondrial (665 aa).

Residues 1 to 53 (MRGCLQVLRWLSTSPARRPVSSGLRLRSYEIVSPSILRPFTSTVRRQAQASRN) constitute a mitochondrion transit peptide. The tr-type G domain occupies 67 to 247 (ERFRNFCIVA…TVIERIPAPV (181 aa)). Residues 76–83 (AHVDHGKS), 140–144 (DTPGH), and 194–197 (NKVD) contribute to the GTP site.

Belongs to the TRAFAC class translation factor GTPase superfamily. Classic translation factor GTPase family. LepA subfamily.

Its subcellular location is the mitochondrion inner membrane. It carries out the reaction GTP + H2O = GDP + phosphate + H(+). Promotes mitochondrial protein synthesis. May act as a fidelity factor of the translation reaction, by catalyzing a one-codon backward translocation of tRNAs on improperly translocated ribosomes. Binds to mitochondrial ribosomes in a GTP-dependent manner. This Talaromyces stipitatus (strain ATCC 10500 / CBS 375.48 / QM 6759 / NRRL 1006) (Penicillium stipitatum) protein is Translation factor guf1, mitochondrial (guf1).